A 116-amino-acid chain; its full sequence is Ribonuclease P protein component (116 aa).

The protein belongs to the RnpA family. In terms of assembly, consists of a catalytic RNA component (M1 or rnpB) and a protein subunit.

It carries out the reaction Endonucleolytic cleavage of RNA, removing 5'-extranucleotides from tRNA precursor.. In terms of biological role, RNaseP catalyzes the removal of the 5'-leader sequence from pre-tRNA to produce the mature 5'-terminus. It can also cleave other RNA substrates such as 4.5S RNA. The protein component plays an auxiliary but essential role in vivo by binding to the 5'-leader sequence and broadening the substrate specificity of the ribozyme. This chain is Ribonuclease P protein component, found in Lachnoclostridium phytofermentans (strain ATCC 700394 / DSM 18823 / ISDg) (Clostridium phytofermentans).